The primary structure comprises 322 residues: Fructose-1,6-bisphosphatase class 1 (322 aa).

Positions 84, 103, 105, and 106 each coordinate Mg(2+). Substrate-binding positions include 106-109 (DGSS), asparagine 198, and lysine 264. Glutamate 270 provides a ligand contact to Mg(2+).

Belongs to the FBPase class 1 family. In terms of assembly, homotetramer. It depends on Mg(2+) as a cofactor.

Its subcellular location is the cytoplasm. The catalysed reaction is beta-D-fructose 1,6-bisphosphate + H2O = beta-D-fructose 6-phosphate + phosphate. It participates in carbohydrate biosynthesis; gluconeogenesis. This is Fructose-1,6-bisphosphatase class 1 from Colwellia psychrerythraea (strain 34H / ATCC BAA-681) (Vibrio psychroerythus).